Here is a 173-residue protein sequence, read N- to C-terminus: Putative metal-dependent hydrolase BT9727_2476 (173 aa).

Residues His-65, His-156, and His-160 each contribute to the Zn(2+) site.

It belongs to the metal hydrolase YfiT family. In terms of assembly, homodimer. Requires Zn(2+) as cofactor.

It is found in the cytoplasm. Functionally, possible metal-dependent hydrolase. The protein is Putative metal-dependent hydrolase BT9727_2476 of Bacillus thuringiensis subsp. konkukian (strain 97-27).